Here is a 166-residue protein sequence, read N- to C-terminus: NAD(P)H-quinone oxidoreductase subunit I, chloroplastic (166 aa).

2 consecutive 4Fe-4S ferredoxin-type domains span residues 55-84 (GRIH…VDWK) and 95-124 (LNYS…MTEE). 8 residues coordinate [4Fe-4S] cluster: Cys-64, Cys-67, Cys-70, Cys-74, Cys-104, Cys-107, Cys-110, and Cys-114.

The protein belongs to the complex I 23 kDa subunit family. In terms of assembly, NDH is composed of at least 16 different subunits, 5 of which are encoded in the nucleus. [4Fe-4S] cluster serves as cofactor.

It localises to the plastid. The protein resides in the chloroplast thylakoid membrane. The catalysed reaction is a plastoquinone + NADH + (n+1) H(+)(in) = a plastoquinol + NAD(+) + n H(+)(out). The enzyme catalyses a plastoquinone + NADPH + (n+1) H(+)(in) = a plastoquinol + NADP(+) + n H(+)(out). In terms of biological role, NDH shuttles electrons from NAD(P)H:plastoquinone, via FMN and iron-sulfur (Fe-S) centers, to quinones in the photosynthetic chain and possibly in a chloroplast respiratory chain. The immediate electron acceptor for the enzyme in this species is believed to be plastoquinone. Couples the redox reaction to proton translocation, and thus conserves the redox energy in a proton gradient. The protein is NAD(P)H-quinone oxidoreductase subunit I, chloroplastic of Aphanactis jamesoniana.